The primary structure comprises 79 residues: uncharacterized protein (79 aa).

The first 19 residues, 1 to 19 (MKYVALAFVLSLVILQISA), serve as a signal peptide directing secretion.

In terms of tissue distribution, nacreous layer of shell (at protein level). Expressed primarily in the mantle with highest level in the mantle pallium and lower level in the mantle edge.

The protein resides in the secreted. This is an uncharacterized protein from Pinctada maxima (Silver-lipped pearl oyster).